Consider the following 397-residue polypeptide: Fractalkine (397 aa).

The signal sequence occupies residues 1–24; the sequence is MAPISLSWLLRLATFCHLTVLLAG. Residues 25-100 are chemokine and involved in interaction with ITGAV:ITGB3 and ITGA4:ITGB1; sequence QHHGVTKCNI…RQAAALTRNG (76 aa). Residues 25–341 lie on the Extracellular side of the membrane; sequence QHHGVTKCNI…PDAQAATRRQ (317 aa). Intrachain disulfides connect C32/C58 and C36/C74. N33 carries an N-linked (GlcNAc...) asparagine glycan. The segment at 101–341 is mucin-like stalk; sequence GTFEKQIGEV…PDAQAATRRQ (241 aa). 2 disordered regions span residues 128–265 and 289–309; these read EPEA…REEM and VPVS…SWTP. Polar residues predominate over residues 133–147; that stretch reads GESSSLEPTPSSQEA. T183 carries O-linked (GalNAc...) threonine glycosylation. Residues 193–202 show a composition bias toward polar residues; that stretch reads TAATWQSSAP. Over residues 219–243 the composition is skewed to low complexity; that stretch reads PSTQDPSTQASTASSPAPEENAPSE. S253 carries O-linked (GalNAc...) serine glycosylation. T329 carries an O-linked (GalNAc...) threonine glycan. The helical transmembrane segment at 342–362 threads the bilayer; the sequence is AVGLLAFLGLLFCLGVAMFTY. At 363–397 the chain is on the cytoplasmic side; the sequence is QSLQGCPRKMAGEMAEGLRYIPRSCGSNSYVLVPV.

It belongs to the intercrine delta family. As to quaternary structure, monomer. Forms a ternary complex with CX3CR1 and ITGAV:ITGB3 or ITGA4:ITGB1. (Microbial infection) Interacts with pox virus crmD; this inhibits cell migration mediated by CX3CL1. In terms of assembly, (Microbial infection) Interacts (via N-terminus) with human cytomegalovirus (HHV-5) US28. As to quaternary structure, (Microbial infection) Interacts with P.falciparum (strain 3D7) CBP1 and CBP2 (via their extracellular domains); the interaction mediates the adhesion of infected erythrocytes with endothelial cells. A soluble short 95 kDa form may be released by proteolytic cleavage from the long membrane-anchored form. In terms of processing, O-glycosylated with core 1 or possibly core 8 glycans. Expressed in the seminal plasma, endometrial fluid and follicular fluid (at protein level). Small intestine, colon, testis, prostate, heart, brain, lung, skeletal muscle, kidney and pancreas. Most abundant in the brain and heart.

The protein resides in the cell membrane. It localises to the secreted. In terms of biological role, chemokine that acts as a ligand for both CX3CR1 and integrins ITGAV:ITGB3 and ITGA4:ITGB1. The CX3CR1-CX3CL1 signaling exerts distinct functions in different tissue compartments, such as immune response, inflammation, cell adhesion and chemotaxis. Regulates leukocyte adhesion and migration processes at the endothelium. Can activate integrins in both a CX3CR1-dependent and CX3CR1-independent manner. In the presence of CX3CR1, activates integrins by binding to the classical ligand-binding site (site 1) in integrins. In the absence of CX3CR1, binds to a second site (site 2) in integrins which is distinct from site 1 and enhances the binding of other integrin ligands to site 1. The soluble form is chemotactic for T-cells and monocytes, but not for neutrophils. Its function is as follows. The membrane-bound form promotes adhesion of those leukocytes to endothelial cells. Functionally, (Microbial infection) Mediates the cytoadherence of erythrocytes infected with parasite P.falciparum (strain 3D7) with endothelial cells by interacting with P.falciparum CBP1 and CBP2 expressed at the surface of erythrocytes. The adhesion prevents the elimination of infected erythrocytes by the spleen. The chain is Fractalkine from Homo sapiens (Human).